Consider the following 319-residue polypeptide: tRNA dimethylallyltransferase (319 aa).

Position 10-17 (10-17) interacts with ATP; it reads GPTAVGKT. Residue 12–17 coordinates substrate; sequence TAVGKT. The interval 35-38 is interaction with substrate tRNA; sequence DSMQ.

The protein belongs to the IPP transferase family. In terms of assembly, monomer. Requires Mg(2+) as cofactor.

It catalyses the reaction adenosine(37) in tRNA + dimethylallyl diphosphate = N(6)-dimethylallyladenosine(37) in tRNA + diphosphate. Catalyzes the transfer of a dimethylallyl group onto the adenine at position 37 in tRNAs that read codons beginning with uridine, leading to the formation of N6-(dimethylallyl)adenosine (i(6)A). This is tRNA dimethylallyltransferase from Symbiobacterium thermophilum (strain DSM 24528 / JCM 14929 / IAM 14863 / T).